A 71-amino-acid chain; its full sequence is Large ribosomal subunit protein bL31 (71 aa).

Positions 16, 18, 37, and 40 each coordinate Zn(2+).

Belongs to the bacterial ribosomal protein bL31 family. Type A subfamily. Part of the 50S ribosomal subunit. The cofactor is Zn(2+).

In terms of biological role, binds the 23S rRNA. The protein is Large ribosomal subunit protein bL31 of Wigglesworthia glossinidia brevipalpis.